The following is a 266-amino-acid chain: Glucosamine-6-phosphate deaminase (266 aa).

The active-site Proton acceptor; for enolization step is Asp-72. Catalysis depends on Asp-141, which acts as the For ring-opening step. His-143 acts as the Proton acceptor; for ring-opening step in catalysis. The For ring-opening step role is filled by Glu-148.

The protein belongs to the glucosamine/galactosamine-6-phosphate isomerase family. NagB subfamily. In terms of assembly, homohexamer.

The enzyme catalyses alpha-D-glucosamine 6-phosphate + H2O = beta-D-fructose 6-phosphate + NH4(+). Its pathway is amino-sugar metabolism; N-acetylneuraminate degradation; D-fructose 6-phosphate from N-acetylneuraminate: step 5/5. With respect to regulation, allosterically activated by N-acetylglucosamine 6-phosphate (GlcNAc6P). Its function is as follows. Catalyzes the reversible isomerization-deamination of glucosamine 6-phosphate (GlcN6P) to form fructose 6-phosphate (Fru6P) and ammonium ion. This chain is Glucosamine-6-phosphate deaminase, found in Klebsiella pneumoniae subsp. pneumoniae (strain ATCC 700721 / MGH 78578).